The sequence spans 90 residues: ATP synthase subunit c (90 aa).

Transmembrane regions (helical) follow at residues 17 to 37 (PLAYGLTMVAAGLAIMGAGVV) and 70 to 90 (LAIVETASIYCFIIALLIIFV).

The protein belongs to the ATPase C chain family. In terms of assembly, F-type ATPases have 2 components, F(1) - the catalytic core - and F(0) - the membrane proton channel. F(1) has five subunits: alpha(3), beta(3), gamma(1), delta(1), epsilon(1). F(0) has three main subunits: a(1), b(2) and c(10-14). The alpha and beta chains form an alternating ring which encloses part of the gamma chain. F(1) is attached to F(0) by a central stalk formed by the gamma and epsilon chains, while a peripheral stalk is formed by the delta and b chains.

Its subcellular location is the cell membrane. F(1)F(0) ATP synthase produces ATP from ADP in the presence of a proton or sodium gradient. F-type ATPases consist of two structural domains, F(1) containing the extramembraneous catalytic core and F(0) containing the membrane proton channel, linked together by a central stalk and a peripheral stalk. During catalysis, ATP synthesis in the catalytic domain of F(1) is coupled via a rotary mechanism of the central stalk subunits to proton translocation. In terms of biological role, key component of the F(0) channel; it plays a direct role in translocation across the membrane. A homomeric c-ring of between 10-14 subunits forms the central stalk rotor element with the F(1) delta and epsilon subunits. The protein is ATP synthase subunit c of Metamycoplasma arthritidis (strain 158L3-1) (Mycoplasma arthritidis).